The primary structure comprises 861 residues: DNA mismatch repair protein MutS (861 aa).

616–623 contributes to the ATP binding site; sequence GPNMGGKS.

It belongs to the DNA mismatch repair MutS family.

Functionally, this protein is involved in the repair of mismatches in DNA. It is possible that it carries out the mismatch recognition step. This protein has a weak ATPase activity. The chain is DNA mismatch repair protein MutS from Haemophilus influenzae (strain 86-028NP).